We begin with the raw amino-acid sequence, 445 residues long: Phosphoglucosamine mutase 1 (445 aa).

Ser-102 acts as the Phosphoserine intermediate in catalysis. Residues Ser-102, Asp-241, Asp-243, and Asp-245 each coordinate Mg(2+). At Ser-102 the chain carries Phosphoserine.

This sequence belongs to the phosphohexose mutase family. It depends on Mg(2+) as a cofactor. In terms of processing, activated by phosphorylation.

The enzyme catalyses alpha-D-glucosamine 1-phosphate = D-glucosamine 6-phosphate. In terms of biological role, catalyzes the conversion of glucosamine-6-phosphate to glucosamine-1-phosphate. The chain is Phosphoglucosamine mutase 1 from Shewanella sp. (strain MR-7).